Here is a 51-residue protein sequence, read N- to C-terminus: Insulin (51 aa).

3 cysteine pairs are disulfide-bonded: cysteine 7/cysteine 37, cysteine 19/cysteine 50, and cysteine 36/cysteine 41.

The protein belongs to the insulin family. In terms of assembly, heterodimer of a B chain and an A chain linked by two disulfide bonds.

The protein resides in the secreted. Its function is as follows. Insulin decreases blood glucose concentration. It increases cell permeability to monosaccharides, amino acids and fatty acids. It accelerates glycolysis, the pentose phosphate cycle, and glycogen synthesis in liver. The chain is Insulin (INS) from Camelus dromedarius (Dromedary).